The following is a 205-amino-acid chain: Protein GrpE (205 aa).

Residues 1-18 (MSEEVKNSVETEENKASK) are compositionally biased toward basic and acidic residues. Residues 1–60 (MSEEVKNSVETEENKASKDNATQAPNPTENHNTAQETEKAENSEKTESATQENESLDKLK) are disordered. Residues 19-35 (DNATQAPNPTENHNTAQ) show a composition bias toward polar residues. Residues 36–47 (ETEKAENSEKTE) are compositionally biased toward basic and acidic residues.

Belongs to the GrpE family. As to quaternary structure, homodimer.

It localises to the cytoplasm. In terms of biological role, participates actively in the response to hyperosmotic and heat shock by preventing the aggregation of stress-denatured proteins, in association with DnaK and GrpE. It is the nucleotide exchange factor for DnaK and may function as a thermosensor. Unfolded proteins bind initially to DnaJ; upon interaction with the DnaJ-bound protein, DnaK hydrolyzes its bound ATP, resulting in the formation of a stable complex. GrpE releases ADP from DnaK; ATP binding to DnaK triggers the release of the substrate protein, thus completing the reaction cycle. Several rounds of ATP-dependent interactions between DnaJ, DnaK and GrpE are required for fully efficient folding. The chain is Protein GrpE from Chloroherpeton thalassium (strain ATCC 35110 / GB-78).